A 1088-amino-acid chain; its full sequence is ATP-dependent helicase/deoxyribonuclease subunit B (1088 aa).

It belongs to the helicase family. AddB/RexB type 2 subfamily. As to quaternary structure, heterodimer of AddA and RexB. It depends on Mg(2+) as a cofactor.

In terms of biological role, the heterodimer acts as both an ATP-dependent DNA helicase and an ATP-dependent, dual-direction single-stranded exonuclease. Recognizes the chi site generating a DNA molecule suitable for the initiation of homologous recombination. This subunit has 5' -&gt; 3' nuclease activity but not helicase activity. This is ATP-dependent helicase/deoxyribonuclease subunit B from Streptococcus suis (strain 98HAH33).